The primary structure comprises 159 residues: 17 kDa surface antigen (159 aa).

A signal peptide spans 1–19 (MKLLSKIMIIALAASMLQA). C20 carries N-palmitoyl cysteine lipidation. The S-diacylglycerol cysteine moiety is linked to residue C20.

The protein belongs to the rickettsiale 17 kDa surface antigen family.

The protein resides in the cell outer membrane. This Rickettsia felis (strain ATCC VR-1525 / URRWXCal2) (Rickettsia azadi) protein is 17 kDa surface antigen (omp).